Reading from the N-terminus, the 772-residue chain is PDZ domain-containing protein 4 (772 aa).

Residues 136–221 (EVELCKNSHQ…NISLLVARPE (86 aa)) enclose the PDZ domain. Residues 239–320 (DFGSENEGDL…TNTPGSLRKF (82 aa)) form a disordered region. Residue S242 is modified to Phosphoserine. Residues 287–303 (RTDESTRNEESSEHDLL) show a composition bias toward basic and acidic residues. A coiled-coil region spans residues 394–424 (VNRNESLGHEMAMLEEELRHLEFKCRNILRA). The interval 450–573 (ASEPKKHELS…VGPEGSPYLS (124 aa)) is disordered. Over residues 452 to 472 (EPKKHELSDISELPEKSDKDS) the composition is skewed to basic and acidic residues. Position 459 is a phosphoserine (S459). 2 stretches are compositionally biased toward polar residues: residues 473-484 (TSAYNTGESCRS) and 502-511 (AGNSNLNRTP). The span at 535-552 (LSRDPEVGRRQHTEERVR) shows a compositional bias: basic and acidic residues.

The protein resides in the cytoplasm. It localises to the cell cortex. The polypeptide is PDZ domain-containing protein 4 (Pdzd4) (Mus musculus (Mouse)).